Reading from the N-terminus, the 34-residue chain is Photosystem II reaction center protein M (34 aa).

The chain crosses the membrane as a helical span at residues 5–25 (ILGLIATALFIIIPTSFLLIL).

The protein belongs to the PsbM family. As to quaternary structure, PSII is composed of 1 copy each of membrane proteins PsbA, PsbB, PsbC, PsbD, PsbE, PsbF, PsbH, PsbI, PsbJ, PsbK, PsbL, PsbM, PsbT, PsbX, PsbY, PsbZ, Psb30/Ycf12, at least 3 peripheral proteins of the oxygen-evolving complex and a large number of cofactors. It forms dimeric complexes.

It is found in the plastid. It localises to the chloroplast thylakoid membrane. Its function is as follows. One of the components of the core complex of photosystem II (PSII). PSII is a light-driven water:plastoquinone oxidoreductase that uses light energy to abstract electrons from H(2)O, generating O(2) and a proton gradient subsequently used for ATP formation. It consists of a core antenna complex that captures photons, and an electron transfer chain that converts photonic excitation into a charge separation. This subunit is found at the monomer-monomer interface. The protein is Photosystem II reaction center protein M of Nephroselmis olivacea (Green alga).